The chain runs to 327 residues: Aspartate--ammonia ligase (327 aa).

It belongs to the class-II aminoacyl-tRNA synthetase family. AsnA subfamily.

The protein localises to the cytoplasm. It catalyses the reaction L-aspartate + NH4(+) + ATP = L-asparagine + AMP + diphosphate + H(+). It participates in amino-acid biosynthesis; L-asparagine biosynthesis; L-asparagine from L-aspartate (ammonia route): step 1/1. This is Aspartate--ammonia ligase from Bacillus anthracis (strain A0248).